Consider the following 128-residue polypeptide: Ribosome-binding factor A (128 aa).

Belongs to the RbfA family. In terms of assembly, monomer. Binds 30S ribosomal subunits, but not 50S ribosomal subunits or 70S ribosomes.

Its subcellular location is the cytoplasm. Functionally, one of several proteins that assist in the late maturation steps of the functional core of the 30S ribosomal subunit. Associates with free 30S ribosomal subunits (but not with 30S subunits that are part of 70S ribosomes or polysomes). Required for efficient processing of 16S rRNA. May interact with the 5'-terminal helix region of 16S rRNA. This Rickettsia prowazekii (strain Madrid E) protein is Ribosome-binding factor A.